We begin with the raw amino-acid sequence, 386 residues long: ADP,ATP carrier protein, mitochondrial (386 aa).

The N-terminal 77 residues, 1-77, are a transit peptide targeting the mitochondrion; the sequence is MADMNQHPTV…SNASPVFVQA (77 aa). 3 Solcar repeats span residues 84-177, 189-281, and 289-375; these read AAFA…FKRL, KWFA…LKPV, and DSFF…LQVL. 5 helical membrane-spanning segments follow: residues 86 to 113, 154 to 178, 187 to 207, 257 to 278, and 292 to 312; these read FATD…VKLL, TANV…KRLF, YWKW…SSLF, FNIS…YDSL, and FASF…SYPI. 2 residues coordinate ADP: Arg159 and Lys171. Arg316 contributes to the ADP binding site. The tract at residues 316 to 321 is important for transport activity; sequence RRRMMM. The short motif at 316 to 321 is the Nucleotide carrier signature motif element; that stretch reads RRRMMM. Residues 352 to 372 form a helical membrane-spanning segment; the sequence is AGANILRAVAGAGVLAGYDKL.

The protein belongs to the mitochondrial carrier (TC 2.A.29) family. As to quaternary structure, monomer.

The protein localises to the mitochondrion inner membrane. It catalyses the reaction ADP(in) + ATP(out) = ADP(out) + ATP(in). With respect to regulation, the matrix-open state (m-state) is inhibited by the membrane-permeable bongkrekic acid (BKA). The cytoplasmic-open state (c-state) is inhibited by the membrane-impermeable toxic inhibitor carboxyatractyloside (CATR). In terms of biological role, ADP:ATP antiporter that mediates import of ADP into the mitochondrial matrix for ATP synthesis, and export of ATP out to fuel the cell. Cycles between the cytoplasmic-open state (c-state) and the matrix-open state (m-state): operates by the alternating access mechanism with a single substrate-binding site intermittently exposed to either the cytosolic (c-state) or matrix (m-state) side of the inner mitochondrial membrane. The sequence is that of ADP,ATP carrier protein, mitochondrial (ANT) from Solanum tuberosum (Potato).